Here is a 191-residue protein sequence, read N- to C-terminus: Pyridoxal 5'-phosphate synthase subunit PdxT (191 aa).

Residue 48-50 participates in L-glutamine binding; sequence GES. The Nucleophile role is filled by C79. L-glutamine is bound by residues R106 and 134–135; that span reads IR. Residues H170 and E172 each act as charge relay system in the active site.

The protein belongs to the glutaminase PdxT/SNO family. In the presence of PdxS, forms a dodecamer of heterodimers. Only shows activity in the heterodimer.

The catalysed reaction is aldehydo-D-ribose 5-phosphate + D-glyceraldehyde 3-phosphate + L-glutamine = pyridoxal 5'-phosphate + L-glutamate + phosphate + 3 H2O + H(+). It catalyses the reaction L-glutamine + H2O = L-glutamate + NH4(+). It functions in the pathway cofactor biosynthesis; pyridoxal 5'-phosphate biosynthesis. Functionally, catalyzes the hydrolysis of glutamine to glutamate and ammonia as part of the biosynthesis of pyridoxal 5'-phosphate. The resulting ammonia molecule is channeled to the active site of PdxS. The chain is Pyridoxal 5'-phosphate synthase subunit PdxT from Oenococcus oeni (strain ATCC BAA-331 / PSU-1).